The primary structure comprises 1375 residues: Patatin-like phospholipase domain-containing protein 6 (1375 aa).

The tract at residues 1–20 is disordered; it reads MEAPLQTGMMGTSSHGLATN. At 1-59 the chain is on the lumenal side; sequence MEAPLQTGMMGTSSHGLATNSSGAKVAERDGFQDVLAPGEGSAGRICGAQPVPFVPQVL. The span at 9–20 shows a compositional bias: polar residues; sequence MMGTSSHGLATN. N20 carries N-linked (GlcNAc...) asparagine glycosylation. A helical transmembrane segment spans residues 60 to 80; sequence GVMIGAGVAVVVTAVLILLVV. Residues 81–1375 lie on the Cytoplasmic side of the membrane; that stretch reads RRLRVPKTPA…QEPPGSATDA (1295 aa). 195-322 is a binding site for a nucleoside 3',5'-cyclic phosphate; the sequence is VLGHFEKPLF…VRVVQIIMVR (128 aa). Disordered stretches follow at residues 352–436 and 449–472; these read FPSP…RSDF and LQEE…PREQ. At S354 the chain carries Phosphoserine. Residues 359–376 show a composition bias toward polar residues; that stretch reads TRTSPVRGSKRMVSTSAT. A Phosphothreonine modification is found at T361. Residues S362 and S372 each carry the phosphoserine modification. The segment covering 384–398 has biased composition (pro residues); sequence GRPPDPTGAPLPGPT. S420 is subject to Phosphoserine. The residue at position 464 (T464) is a Phosphothreonine. A nucleoside 3',5'-cyclic phosphate contacts are provided by residues 511-633 and 629-749; these read ELAK…VAAR and TVAA…LSQK. Residues 981-1147 form the PNPLA domain; it reads LVLGGGGARG…INNLPADIAR (167 aa). Positions 985–990 match the GXGXXG motif; it reads GGGARG. A GXSXG motif is present at residues 1012–1016; sequence GTSIG. S1014 acts as the Nucleophile in catalysis. D1134 (proton acceptor) is an active-site residue. A DGA/G motif is present at residues 1134–1136; the sequence is DGG. The segment at 1306–1375 is disordered; the sequence is SYVSDGCADG…QEPPGSATDA (70 aa). The segment covering 1313–1329 has biased composition (acidic residues); that stretch reads ADGEESDCLTEYEEDAG.

Belongs to the NTE family. Glycosylated. As to expression, expressed in brain, placenta, kidney, neuron and skeletal muscle. Expressed in the developing eye, pituitary and brain.

Its subcellular location is the endoplasmic reticulum membrane. The enzyme catalyses a 1-acyl-sn-glycero-3-phosphocholine + H2O = sn-glycerol 3-phosphocholine + a fatty acid + H(+). It catalyses the reaction 1-(9Z-octadecenoyl)-sn-glycero-3-phosphocholine + H2O = sn-glycerol 3-phosphocholine + (9Z)-octadecenoate + H(+). It carries out the reaction 1-hexadecanoylglycerol + H2O = glycerol + hexadecanoate + H(+). The catalysed reaction is 2-hexadecanoylglycerol + H2O = glycerol + hexadecanoate + H(+). The enzyme catalyses 1-(9Z-octadecenoyl)-glycerol + H2O = glycerol + (9Z)-octadecenoate + H(+). It catalyses the reaction 2-(9Z-octadecenoyl)-glycerol + H2O = glycerol + (9Z)-octadecenoate + H(+). It carries out the reaction 2-(5Z,8Z,11Z,14Z-eicosatetraenoyl)-glycerol + H2O = glycerol + (5Z,8Z,11Z,14Z)-eicosatetraenoate + H(+). The catalysed reaction is 1-hexadecanoyl-sn-glycero-3-phosphate + H2O = sn-glycerol 3-phosphate + hexadecanoate + H(+). The enzyme catalyses 1-hexadecanoyl-sn-glycero-3-phosphocholine + H2O = sn-glycerol 3-phosphocholine + hexadecanoate + H(+). With respect to regulation, inhibited by a series a OPs such as mipafox (MPX), phenyl saligenin phosphate (PSP), phenyl dipentyl phosphinate (PDPP), diisopropyl fluorophosphate and paraoxon. Phospholipase B that deacylates intracellular phosphatidylcholine (PtdCho), generating glycerophosphocholine (GroPtdCho). This deacylation occurs at both sn-2 and sn-1 positions of PtdCho. Catalyzes the hydrolysis of several naturally occurring membrane-associated lipids. Hydrolyzes lysophospholipids and monoacylglycerols, preferring the 1-acyl to the 2-acyl isomer. Does not catalyze hydrolysis of di- or triacylglycerols or fatty acid amides. In Homo sapiens (Human), this protein is Patatin-like phospholipase domain-containing protein 6.